A 590-amino-acid chain; its full sequence is Plasmepsin V (590 aa).

The Lumenal segment spans residues 1-544 (MNNYFLRKEN…EKENIFLKVS (544 aa)). A coiled-coil region spans residues 33–81 (CNNVENKIDNVGKKIENVGKKIGDMENKNDNVENKNDNVGNKNDNVKNA). Residues 100–514 (YFLDIDIGKP…DLQQNQIAFI (415 aa)) enclose the Peptidase A1 domain. Asp118 is an active-site residue. 7 disulfide bridges follow: Cys128–Cys211, Cys131–Cys134, Cys155–Cys166, Cys160–Cys171, Cys259–Cys518, Cys389–Cys434, and Cys443–Cys479. Over residues 282-291 (KEKQKMDKSD) the composition is skewed to basic and acidic residues. The disordered stretch occupies residues 282-316 (KEKQKMDKSDNNSSNKGNVSIKLKNNDKNDDEENN). Over residues 292-304 (NNSSNKGNVSIKL) the composition is skewed to low complexity. Residue Asp365 is part of the active site. A helical transmembrane segment spans residues 545 to 565 (YINLYCLWLLLALTILLSLIL). Residues 566 to 590 (YVRKMFYMDYFPLSDQNKSPIQEST) lie on the Cytoplasmic side of the membrane.

The protein belongs to the peptidase A1 family. As to quaternary structure, component of a complex composed of SPC25 and PMV; the interaction is mediated via the transmembrane domains. The complex interacts with the SEC61 channel-forming translocon complex and is involved in the recognition and import of PEXEL motif-containing proteins into the ER for subsequent export. Post-translationally, it is not clear if the zymogen has a cleavable propeptide. In vitro, appears to be cleaved between Asn-80 and Ala-81. Cleavage of the putative propeptide is dispensable for catalytic activity.

It localises to the endoplasmic reticulum membrane. Its activity is regulated as follows. Inhibited by peptidomimetic inhibitor WEHI-842. Inhibited by Cu(2+) and Hg(2+). In terms of biological role, during the asexual blood stage, plays an essential role in the export of several proteins into the host erythrocytes by cleaving the pentameric localization motif RxLxE/Q/D (termed Plasmodium export element (PEXEL)) located downstream of the N-terminal secretory signal sequence. Specifically, cleaves after the leucine residue in the RxLxE/Q/D (or RxLxxE) motif of exported proteins including RESA, EMP2, EMP3, KAHRP, RIF/Rifin and STEVOR. Also, by regulating protein export, plays an essential role in gametocyte development and thus, parasite transmission to the mosquito vector. This chain is Plasmepsin V, found in Plasmodium falciparum (isolate 3D7).